The sequence spans 257 residues: Imidazole glycerol phosphate synthase subunit HisF (257 aa).

Active-site residues include Asp12 and Asp131.

The protein belongs to the HisA/HisF family. Heterodimer of HisH and HisF.

The protein localises to the cytoplasm. The catalysed reaction is 5-[(5-phospho-1-deoxy-D-ribulos-1-ylimino)methylamino]-1-(5-phospho-beta-D-ribosyl)imidazole-4-carboxamide + L-glutamine = D-erythro-1-(imidazol-4-yl)glycerol 3-phosphate + 5-amino-1-(5-phospho-beta-D-ribosyl)imidazole-4-carboxamide + L-glutamate + H(+). It participates in amino-acid biosynthesis; L-histidine biosynthesis; L-histidine from 5-phospho-alpha-D-ribose 1-diphosphate: step 5/9. IGPS catalyzes the conversion of PRFAR and glutamine to IGP, AICAR and glutamate. The HisF subunit catalyzes the cyclization activity that produces IGP and AICAR from PRFAR using the ammonia provided by the HisH subunit. In Burkholderia lata (strain ATCC 17760 / DSM 23089 / LMG 22485 / NCIMB 9086 / R18194 / 383), this protein is Imidazole glycerol phosphate synthase subunit HisF.